A 308-amino-acid polypeptide reads, in one-letter code: tRNA dimethylallyltransferase (308 aa).

14-21 (GPTASGKT) is a binding site for ATP. A substrate-binding site is contributed by 16-21 (TASGKT). 3 interaction with substrate tRNA regions span residues 39 to 42 (DSAL), 163 to 167 (QRLAR), and 244 to 249 (RCVGYR).

It belongs to the IPP transferase family. As to quaternary structure, monomer. Requires Mg(2+) as cofactor.

It carries out the reaction adenosine(37) in tRNA + dimethylallyl diphosphate = N(6)-dimethylallyladenosine(37) in tRNA + diphosphate. Its function is as follows. Catalyzes the transfer of a dimethylallyl group onto the adenine at position 37 in tRNAs that read codons beginning with uridine, leading to the formation of N6-(dimethylallyl)adenosine (i(6)A). The sequence is that of tRNA dimethylallyltransferase from Shewanella piezotolerans (strain WP3 / JCM 13877).